Consider the following 763-residue polypeptide: F-box protein SKP2 (763 aa).

Positions 54-100 constitute an F-box domain; that stretch reads KSSLMCLPTKVLLLILRTLDFNTLVTLCQVNSRFYNLITNEFLFQNV. Threonine 594 is modified (phosphothreonine).

In terms of assembly, interacts with SKP1. Component of the probable SCF(SKP2) complex containing CDC53, SKP1, RBX1 and SKP2. May interact with ribosomes.

It is found in the cytoplasm. The protein operates within protein modification; protein ubiquitination. Functionally, substrate recognition component of a SCF (SKP1-CUL1-F-box protein) E3 ubiquitin-protein ligase complex which mediates the ubiquitination and subsequent proteasomal degradation of target proteins. Probably recognizes and binds to phosphorylated target proteins. Regulates protein levels of sulfur metabolism enzymes. The SCF(SKP2) complex may regulate some transcription factors or regulators of cysteine and methionine biosynthesis. The sequence is that of F-box protein SKP2 (SKP2) from Saccharomyces cerevisiae (strain ATCC 204508 / S288c) (Baker's yeast).